Reading from the N-terminus, the 159-residue chain is Eukaryotic translation initiation factor 5A (159 aa).

The residue at position 51 (Lys51) is a Hypusine.

The protein belongs to the eIF-5A family. Post-translationally, lys-51 undergoes hypusination, a unique post-translational modification that consists in the addition of a butylamino group from spermidine to lysine side chain, leading to the formation of the unusual amino acid hypusine. eIF-5As are the only known proteins to undergo this modification, which is essential for their function.

It localises to the cytoplasm. Functionally, translation factor that promotes translation elongation and termination, particularly upon ribosome stalling at specific amino acid sequence contexts. Binds between the exit (E) and peptidyl (P) site of the ribosome and promotes rescue of stalled ribosome: specifically required for efficient translation of polyproline-containing peptides as well as other motifs that stall the ribosome. Acts as a ribosome quality control (RQC) cofactor by joining the RQC complex to facilitate peptidyl transfer during CAT tailing step. Functions as a regulator of autophagy. The chain is Eukaryotic translation initiation factor 5A from Drosophila melanogaster (Fruit fly).